Reading from the N-terminus, the 507-residue chain is Chromosomal replication initiator protein DnaA (507 aa).

The domain I, interacts with DnaA modulators stretch occupies residues 1-112; it reads MTDDPGSGFT…PATDEADDTT (112 aa). Residues 99 to 162 are disordered; the sequence is RIAPPATDEA…ERPRNTDSAT (64 aa). Polar residues predominate over residues 113–127; that stretch reads VPPSENPATTSPDTT. Positions 113–166 are domain II; it reads VPPSENPATTSPDTTTDNDEIDDSAAARGDNQHSWPSYFTERPRNTDSATAGVT. The tract at residues 167 to 383 is domain III, AAA+ region; the sequence is SLNRRYTFDT…GALIRVTAFA (217 aa). Positions 211, 213, 214, and 215 each coordinate ATP. The segment at 384-507 is domain IV, binds dsDNA; that stretch reads SLNKTPIDKA…TTRIRQRSKR (124 aa).

This sequence belongs to the DnaA family. As to quaternary structure, oligomerizes as a right-handed, spiral filament on DNA at oriC.

It localises to the cytoplasm. In terms of biological role, plays an essential role in the initiation and regulation of chromosomal replication. ATP-DnaA binds to the origin of replication (oriC) to initiate formation of the DNA replication initiation complex once per cell cycle. Binds the DnaA box (a 9 base pair repeat at the origin) and separates the double-stranded (ds)DNA. Forms a right-handed helical filament on oriC DNA; dsDNA binds to the exterior of the filament while single-stranded (ss)DNA is stabiized in the filament's interior. The ATP-DnaA-oriC complex binds and stabilizes one strand of the AT-rich DNA unwinding element (DUE), permitting loading of DNA polymerase. After initiation quickly degrades to an ADP-DnaA complex that is not apt for DNA replication. Binds acidic phospholipids. This chain is Chromosomal replication initiator protein DnaA, found in Mycobacterium bovis (strain BCG / Tokyo 172 / ATCC 35737 / TMC 1019).